A 325-amino-acid polypeptide reads, in one-letter code: Bifunctional ligase/repressor BirA (325 aa).

Positions 23–42 (GQKISDALGCSRTAVWKHIE) form a DNA-binding region, H-T-H motif. The BPL/LPL catalytic domain occupies 74–262 (RFGLKTEVMG…CFEKRYRDYM (189 aa)). Residues Q118, 122–124 (RGR), and K189 contribute to the biotin site.

The protein belongs to the biotin--protein ligase family.

It catalyses the reaction biotin + L-lysyl-[protein] + ATP = N(6)-biotinyl-L-lysyl-[protein] + AMP + diphosphate + H(+). Acts both as a biotin--[acetyl-CoA-carboxylase] ligase and a repressor. The sequence is that of Bifunctional ligase/repressor BirA from Bacillus spizizenii (strain ATCC 23059 / NRRL B-14472 / W23) (Bacillus subtilis subsp. spizizenii).